We begin with the raw amino-acid sequence, 335 residues long: Anthranilate phosphoribosyltransferase (335 aa).

5-phospho-alpha-D-ribose 1-diphosphate contacts are provided by residues G79, 82–83 (GD), T87, 89–92 (NIST), 107–115 (KHCNQGVSS), and S119. G79 contributes to the anthranilate binding site. S91 is a Mg(2+) binding site. N110 serves as a coordination point for anthranilate. R165 provides a ligand contact to anthranilate. 2 residues coordinate Mg(2+): D223 and E224.

The protein belongs to the anthranilate phosphoribosyltransferase family. As to quaternary structure, homodimer. Mg(2+) serves as cofactor.

The catalysed reaction is N-(5-phospho-beta-D-ribosyl)anthranilate + diphosphate = 5-phospho-alpha-D-ribose 1-diphosphate + anthranilate. It participates in amino-acid biosynthesis; L-tryptophan biosynthesis; L-tryptophan from chorismate: step 2/5. In terms of biological role, catalyzes the transfer of the phosphoribosyl group of 5-phosphorylribose-1-pyrophosphate (PRPP) to anthranilate to yield N-(5'-phosphoribosyl)-anthranilate (PRA). This chain is Anthranilate phosphoribosyltransferase, found in Buchnera aphidicola subsp. Diuraphis noxia.